An 851-amino-acid polypeptide reads, in one-letter code: Glutathione transporter 1 (851 aa).

Residues 1 to 14 show a composition bias toward polar residues; the sequence is MTARNSASIPTSIR. The tract at residues 1 to 116 is disordered; sequence MTARNSASIP…LDNETDSEVE (116 aa). N32 carries N-linked (GlcNAc...) asparagine glycosylation. Over residues 33–68 the composition is skewed to low complexity; sequence LSTKTASKTSLTFRQSSSDESTSSYSGNHHNINIQH. Over residues 74–92 the composition is skewed to polar residues; the sequence is FRTNSSSFSPNDYSISESP. The N-linked (GlcNAc...) asparagine glycan is linked to N77. S93 is subject to Phosphoserine. Positions 105–134 form a coiled coil; that stretch reads VQLDNETDSEVESEVEELERELEAIEDSVY. Residue N109 is glycosylated (N-linked (GlcNAc...) asparagine). A run of 2 helical transmembrane segments spans residues 156-176 and 179-199; these read TWVL…FFSL and PALS…GKLL. N-linked (GlcNAc...) asparagine glycosylation is present at N256. A run of 4 helical transmembrane segments spans residues 259–279, 282–302, 333–353, and 405–425; these read WGYK…FAGL, RWIV…TVLF, FFAY…FIFK, and WVIC…VPIL. N-linked (GlcNAc...) asparagine glycosylation is found at N452 and N464. The next 5 helical transmembrane spans lie at 480–500, 531–551, 560–580, 592–612, and 642–662; these read YSMS…HCAL, APQW…IFTV, VWAL…QGVL, IITE…NLMI, and ILFF…VAVQ. N691 is a glycosylation site (N-linked (GlcNAc...) asparagine). 3 helical membrane passes run 711–731, 757–777, and 791–811; these read YYPL…TWGL, PATG…NYVI, and VLAA…FLCV. A glycan (N-linked (GlcNAc...) asparagine) is linked at N843.

This sequence belongs to the oligopeptide OPT transporter family.

It is found in the endoplasmic reticulum membrane. Its subcellular location is the cell membrane. Functionally, high-affinity glutathione transporter which plays a role in scavenging glutathione from the extracellular environment for the maintenance of sulfur homeostasis. The protein is Glutathione transporter 1 (pgt1) of Schizosaccharomyces pombe (strain 972 / ATCC 24843) (Fission yeast).